The sequence spans 368 residues: DNA replication and repair protein RecF (368 aa).

An ATP-binding site is contributed by 30-37 (GNNAQGKT).

Belongs to the RecF family.

The protein localises to the cytoplasm. The RecF protein is involved in DNA metabolism; it is required for DNA replication and normal SOS inducibility. RecF binds preferentially to single-stranded, linear DNA. It also seems to bind ATP. The polypeptide is DNA replication and repair protein RecF (Streptococcus pyogenes serotype M5 (strain Manfredo)).